We begin with the raw amino-acid sequence, 185 residues long: Coiled-coil domain-containing protein 32 (185 aa).

Residues 78–98 are a coiled coil; that stretch reads LASLEKKLRRIKGLNQEVTSK. The interval 159 to 185 is disordered; sequence IPPESQVEKPVAEDEPAAGDKPAAAEQ.

Interacts with AP2S1; the interaction is direct and mediates association with adaptor protein complex 2 (AP-2).

The protein localises to the membrane. It localises to the coated pit. Regulates clathrin-mediated endocytsois of cargos such as transferrin probably through the association and modulation of adaptor protein complex 2 (AP-2). Has a role in ciliogenesis. Required for proper cephalic and left/right axis development. The polypeptide is Coiled-coil domain-containing protein 32 (Homo sapiens (Human)).